A 267-amino-acid polypeptide reads, in one-letter code: Dynein axonemal assembly factor 19 homolog (267 aa).

Disordered regions lie at residues 86–111 and 226–250; these read ISQSQLPPTTPTEVPTTSGDFTRDWR and HQGKQEQPAAAEAPHEEGGSTVDPC.

This sequence belongs to the DNAAF19/PR46b family. Homodimer.

It localises to the cytoplasm. The protein resides in the cell projection. The protein localises to the cilium. It is found in the flagellum. Dynein-attachment factor required for cilia motility. The protein is Dynein axonemal assembly factor 19 homolog (PR46b) of Chlamydomonas reinhardtii (Chlamydomonas smithii).